Reading from the N-terminus, the 476-residue chain is Glycogen synthase (476 aa).

Position 15 (Lys15) interacts with ADP-alpha-D-glucose.

Belongs to the glycosyltransferase 1 family. Bacterial/plant glycogen synthase subfamily.

The catalysed reaction is [(1-&gt;4)-alpha-D-glucosyl](n) + ADP-alpha-D-glucose = [(1-&gt;4)-alpha-D-glucosyl](n+1) + ADP + H(+). It participates in glycan biosynthesis; glycogen biosynthesis. In terms of biological role, synthesizes alpha-1,4-glucan chains using ADP-glucose. This is Glycogen synthase from Yersinia pseudotuberculosis serotype O:1b (strain IP 31758).